Here is a 550-residue protein sequence, read N- to C-terminus: Glucose-6-phosphate isomerase (550 aa).

The active-site Proton donor is glutamate 356. Residues histidine 387 and lysine 515 contribute to the active site.

This sequence belongs to the GPI family.

It localises to the cytoplasm. The enzyme catalyses alpha-D-glucose 6-phosphate = beta-D-fructose 6-phosphate. It participates in carbohydrate biosynthesis; gluconeogenesis. It functions in the pathway carbohydrate degradation; glycolysis; D-glyceraldehyde 3-phosphate and glycerone phosphate from D-glucose: step 2/4. Catalyzes the reversible isomerization of glucose-6-phosphate to fructose-6-phosphate. In Vibrio cholerae serotype O1 (strain ATCC 39315 / El Tor Inaba N16961), this protein is Glucose-6-phosphate isomerase.